Consider the following 221-residue polypeptide: PKHD-type hydroxylase P9515_13321 (221 aa).

Residues 80-174 (TIHGIMFTKS…RLVCVGWIES (95 aa)) enclose the Fe2OG dioxygenase domain. 3 residues coordinate Fe cation: His98, Asp100, and His155. Arg165 contributes to the 2-oxoglutarate binding site.

It depends on Fe(2+) as a cofactor. L-ascorbate is required as a cofactor.

The chain is PKHD-type hydroxylase P9515_13321 from Prochlorococcus marinus (strain MIT 9515).